A 560-amino-acid polypeptide reads, in one-letter code: Ubiquitin carboxyl-terminal hydrolase MINDY-3 homolog (560 aa).

Positions 1 to 13 (MNEKIVREQRGGE) are enriched in basic and acidic residues. Disordered regions lie at residues 1–30 (MNEK…AASA) and 44–91 (SHKT…MLNA). 2 stretches are compositionally biased toward low complexity: residues 15–30 (SPSS…AASA) and 52–81 (TASS…SSSS). Residue C139 is the Nucleophile of the active site. The interval 203 to 237 (TEAGSTKKRSPAGEEESALAGQAAGSSEEVEEAAE) is disordered. Phosphoserine occurs at positions 212 and 219. H403 functions as the Proton acceptor in the catalytic mechanism.

It belongs to the MINDY deubiquitinase family. FAM188 subfamily.

It catalyses the reaction Thiol-dependent hydrolysis of ester, thioester, amide, peptide and isopeptide bonds formed by the C-terminal Gly of ubiquitin (a 76-residue protein attached to proteins as an intracellular targeting signal).. Its function is as follows. Hydrolase that can remove 'Lys-48'-linked conjugated ubiquitin from proteins. The protein is Ubiquitin carboxyl-terminal hydrolase MINDY-3 homolog (mindy3) of Drosophila melanogaster (Fruit fly).